The following is a 392-amino-acid chain: LL-diaminopimelate aminotransferase (392 aa).

The substrate site is built by tyrosine 15, glycine 40, lysine 104, tyrosine 128, and asparagine 178. Pyridoxal 5'-phosphate is bound by residues 103-104 (SK), tyrosine 128, asparagine 178, tyrosine 209, and 237-239 (SVS). Lysine 240 carries the post-translational modification N6-(pyridoxal phosphate)lysine. Arginine 248 contributes to the pyridoxal 5'-phosphate binding site. Substrate is bound at residue arginine 366.

The protein belongs to the class-I pyridoxal-phosphate-dependent aminotransferase family. LL-diaminopimelate aminotransferase subfamily. In terms of assembly, homodimer. It depends on pyridoxal 5'-phosphate as a cofactor.

It catalyses the reaction (2S,6S)-2,6-diaminopimelate + 2-oxoglutarate = (S)-2,3,4,5-tetrahydrodipicolinate + L-glutamate + H2O + H(+). The protein operates within amino-acid biosynthesis; L-lysine biosynthesis via DAP pathway; LL-2,6-diaminopimelate from (S)-tetrahydrodipicolinate (aminotransferase route): step 1/1. In terms of biological role, involved in the synthesis of meso-diaminopimelate (m-DAP or DL-DAP), required for both lysine and peptidoglycan biosynthesis. Catalyzes the direct conversion of tetrahydrodipicolinate to LL-diaminopimelate. This chain is LL-diaminopimelate aminotransferase, found in Desulforudis audaxviator (strain MP104C).